The chain runs to 675 residues: Probable metal-nicotianamine transporter YSL16 (675 aa).

Positions methionine 1 to alanine 11 are enriched in gly residues. The interval methionine 1–alanine 20 is disordered. The next 14 helical transmembrane spans lie at glycine 50–leucine 70, glycine 73–tryptophan 93, cysteine 118–leucine 138, glycine 162–leucine 182, isoleucine 231–leucine 251, leucine 283–isoleucine 303, phenylalanine 329–valine 349, methionine 393–phenylalanine 413, valine 421–leucine 441, isoleucine 453–valine 473, valine 507–phenylalanine 527, leucine 567–leucine 587, phenylalanine 605–tryptophan 625, and alanine 633–phenylalanine 653.

Belongs to the YSL (TC 2.A.67.2) family. In terms of tissue distribution, expressed in roots.

Its subcellular location is the membrane. Its function is as follows. May be involved in the transport of nicotianamine-chelated metals. This is Probable metal-nicotianamine transporter YSL16 (YSL16) from Oryza sativa subsp. japonica (Rice).